A 547-amino-acid polypeptide reads, in one-letter code: MATKLIKHGSKAREQMLEGIDILADAVKVTLGPKGRNVLIEQSFGSPKITKDGVTVAKSIALKDKIRNAGAQLLKSAATKAAEVAGDGTTTATVLARALAREGNKLVAAGYNPMDLKRGMDLAVNAVVEEIKKSSKKINSQEEIAQVGTISSNGDKEIGEKIAKAMEEVGKEGVITVEEAKNFSFDVEVVKGMMFDRGYLSPYFVTNSEKMVAELENPFILLFEKKLSNLQPMLPILEAVVQSQRPLLIIAEDVEGEALATLVVNRLRGGLKVAAVKAPGFGDRRKAMMEDIAILTKGELITEDLGMKLENVSIKSLGTAKRVTISKENTVIVDGNGDKKNIEDRVLQIKSQIAETTSDYDKEKLQERLAKLSGGVAVLKVGGATEVEVKERKDRVEDALAATRAAVEEGVVAGGGVTLLHASQPLTKLKVENKDQQAGIEIVIEALKDPLKQIVENAGENGGVVVGKLLEHKDKNYGFNAQDMQYVDMIKAGIIDPAKVVRTALQDAASVASLIITTETLIVDESSDKEEPMPMRGGMGGMGGMDF.

Residues 30–33 (TLGP), Lys-51, 87–91 (DGTTT), Gly-415, and Asp-496 each bind ATP. The tract at residues 527-547 (SDKEEPMPMRGGMGGMGGMDF) is disordered. A compositionally biased stretch (gly residues) spans 537 to 547 (GGMGGMGGMDF).

This sequence belongs to the chaperonin (HSP60) family. In terms of assembly, forms a cylinder of 14 subunits composed of two heptameric rings stacked back-to-back. Interacts with the co-chaperonin GroES.

Its subcellular location is the cytoplasm. It carries out the reaction ATP + H2O + a folded polypeptide = ADP + phosphate + an unfolded polypeptide.. In terms of biological role, together with its co-chaperonin GroES, plays an essential role in assisting protein folding. The GroEL-GroES system forms a nano-cage that allows encapsulation of the non-native substrate proteins and provides a physical environment optimized to promote and accelerate protein folding. This chain is Chaperonin GroEL, found in Rickettsia massiliae (strain Mtu5).